The sequence spans 362 residues: 3-dehydroquinate synthase (362 aa).

Residues 71–76 (DGEKYK), 105–109 (GVIGD), 129–130 (TT), Lys142, Lys151, and 169–172 (CLKT) contribute to the NAD(+) site. Glu184, His247, and His264 together coordinate Zn(2+).

It belongs to the sugar phosphate cyclases superfamily. Dehydroquinate synthase family. Co(2+) serves as cofactor. It depends on Zn(2+) as a cofactor. Requires NAD(+) as cofactor.

Its subcellular location is the cytoplasm. The catalysed reaction is 7-phospho-2-dehydro-3-deoxy-D-arabino-heptonate = 3-dehydroquinate + phosphate. It participates in metabolic intermediate biosynthesis; chorismate biosynthesis; chorismate from D-erythrose 4-phosphate and phosphoenolpyruvate: step 2/7. Its function is as follows. Catalyzes the conversion of 3-deoxy-D-arabino-heptulosonate 7-phosphate (DAHP) to dehydroquinate (DHQ). The polypeptide is 3-dehydroquinate synthase (Citrobacter koseri (strain ATCC BAA-895 / CDC 4225-83 / SGSC4696)).